Consider the following 158-residue polypeptide: Transcription elongation factor GreA (158 aa).

Residues 47-74 (AEYHAAKEEQSHNEGRIAELEDKLARAD) are a coiled coil.

Belongs to the GreA/GreB family.

Its function is as follows. Necessary for efficient RNA polymerase transcription elongation past template-encoded arresting sites. The arresting sites in DNA have the property of trapping a certain fraction of elongating RNA polymerases that pass through, resulting in locked ternary complexes. Cleavage of the nascent transcript by cleavage factors such as GreA or GreB allows the resumption of elongation from the new 3'terminus. GreA releases sequences of 2 to 3 nucleotides. The chain is Transcription elongation factor GreA from Nitrobacter winogradskyi (strain ATCC 25391 / DSM 10237 / CIP 104748 / NCIMB 11846 / Nb-255).